Here is a 250-residue protein sequence, read N- to C-terminus: MAVTKLVLVRHGESQWNKENRFTGWYDVDLSEKGISEAKAAGKLLKEEGFSFDFAYTSVLKRAIHTLWNVLDELDQAWLPVEKSWKLNERHYGALQGLNKAETAEKYGDEQVKQWRRGFAVTPPELTKDDERYPGHDPRYAKLSEKELPLTESLALTIDRVIPYWNDTILPRMKSGERVIIAAHGNSLRALVKYLDNMSEDEILELNIPTGVPLVYEFDENFKPIKHYYLGNADEIAAKAAAVANQGKAK.

Substrate-binding positions include 10–17 (RHGESQWN), 23–24 (TG), Arg-62, 89–92 (ERHY), Lys-100, 116–117 (RR), and 185–186 (GN). The active-site Tele-phosphohistidine intermediate is His-11. The active-site Proton donor/acceptor is the Glu-89.

This sequence belongs to the phosphoglycerate mutase family. BPG-dependent PGAM subfamily. As to quaternary structure, homodimer.

It catalyses the reaction (2R)-2-phosphoglycerate = (2R)-3-phosphoglycerate. It functions in the pathway carbohydrate degradation; glycolysis; pyruvate from D-glyceraldehyde 3-phosphate: step 3/5. Catalyzes the interconversion of 2-phosphoglycerate and 3-phosphoglycerate. The sequence is that of 2,3-bisphosphoglycerate-dependent phosphoglycerate mutase from Salmonella dublin (strain CT_02021853).